The following is a 326-amino-acid chain: Vitamin B12 import system permease protein BtuC (326 aa).

Helical transmembrane passes span 15–35, 61–81, 88–108, 112–132, 146–166, 184–204, 240–260, 274–294, and 302–322; these read WLLS…CAGE, LAVL…QALF, PGLL…VLLG, LPGW…TLIL, LLAG…AIYF, GGVD…LIWI, GWMV…GLVI, VLLP…DVVA, and ELPI…WLLL.

The protein belongs to the binding-protein-dependent transport system permease family. FecCD subfamily. In terms of assembly, the complex is composed of two ATP-binding proteins (BtuD), two transmembrane proteins (BtuC) and a solute-binding protein (BtuF).

It is found in the cell inner membrane. Part of the ABC transporter complex BtuCDF involved in vitamin B12 import. Involved in the translocation of the substrate across the membrane. In Salmonella choleraesuis (strain SC-B67), this protein is Vitamin B12 import system permease protein BtuC.